The chain runs to 376 residues: 23S rRNA (uracil(747)-C(5))-methyltransferase RlmC (376 aa).

Positions 3, 11, 14, and 87 each coordinate [4Fe-4S] cluster. Positions 212, 241, 262, and 307 each coordinate S-adenosyl-L-methionine. The Nucleophile role is filled by Cys-334.

It belongs to the class I-like SAM-binding methyltransferase superfamily. RNA M5U methyltransferase family. RlmC subfamily.

The catalysed reaction is uridine(747) in 23S rRNA + S-adenosyl-L-methionine = 5-methyluridine(747) in 23S rRNA + S-adenosyl-L-homocysteine + H(+). Functionally, catalyzes the formation of 5-methyl-uridine at position 747 (m5U747) in 23S rRNA. In Salmonella newport (strain SL254), this protein is 23S rRNA (uracil(747)-C(5))-methyltransferase RlmC.